The sequence spans 205 residues: MCKGLAGLPASCLRSAKDMKHRLGFLLQKSDSCEHNSSHNKKDKVIICQRVSQEEVKKWAESLENLISHECGLAAFKAFLKSEYSEENIDFWISCEEYKKIKSPSKLSPKAKKIYNEFISVQASKEVNLDSCTREETSRNMLEPTITCFDEAQKKIFNLMEKDSYRRFLKSRFYLDLVNPSSCGAEKQKGAKSSADCASLVPQCA.

S-palmitoyl cysteine attachment occurs at residues Cys2, Cys12, and Cys95. The region spanning 62–178 (SLENLISHEC…LKSRFYLDLV (117 aa)) is the RGS domain.

Post-translationally, palmitoylated on Cys-2 and/or Cys-12. Phosphorylated by cyclic GMP-dependent protein kinase.

Its function is as follows. Inhibits signal transduction by increasing the GTPase activity of G protein alpha subunits thereby driving them into their inactive GDP-bound form. Activity on G(z)-alpha is inhibited by phosphorylation of the G-protein. Activity on G(z)-alpha and G(i)-alpha-1 is inhibited by palmitoylation of the G-protein. This chain is Regulator of G-protein signaling 4 (RGS4), found in Pongo abelii (Sumatran orangutan).